Consider the following 629-residue polypeptide: Chaperone protein DnaK (629 aa).

Thr-195 bears the Phosphothreonine; by autocatalysis mark. Disordered regions lie at residues 514–533 (EAEQ…EKRN) and 543–629 (LGQL…KPAE). Residues 555 to 590 (DAKDRLKAAADEAEEAVRSDDDSRIERAQKQLEEAM) show a composition bias toward basic and acidic residues. Low complexity predominate over residues 595-614 (TAAQSGSQNQAGQGAQTQTG). The span at 615–629 (RQEDDVIDADFKPAE) shows a compositional bias: basic and acidic residues.

It belongs to the heat shock protein 70 family.

Functionally, acts as a chaperone. The protein is Chaperone protein DnaK of Deinococcus geothermalis (strain DSM 11300 / CIP 105573 / AG-3a).